Here is a 208-residue protein sequence, read N- to C-terminus: Transmembrane protein 222 (208 aa).

The disordered stretch occupies residues 1–34; it reads MAEAEGSSPLLLQPPPPPPRMAEVETPTGAETDM. The Extracellular segment spans residues 1-55; that stretch reads MAEAEGSSPLLLQPPPPPPRMAEVETPTGAETDMKQYHGSGGVVMDVERSRFPYC. A helical transmembrane segment spans residues 56–76; the sequence is VVWTPIPVLTWFFPIIGHMGI. At 77–164 the chain is on the cytoplasmic side; that stretch reads CTSAGVIRDF…MRYNNSTNWN (88 aa). Residues 165–185 form a helical membrane-spanning segment; it reads MVTLCCFCLIYGKYVSVGAFV. Position 186 (Lys186) is a topological domain, extracellular. Residues 187 to 207 form a helical membrane-spanning segment; it reads TWLPFVLLLGIILTVSLVFNL. Residue Arg208 is a topological domain, cytoplasmic.

It localises to the membrane. The protein resides in the cell projection. Its subcellular location is the dendrite. The polypeptide is Transmembrane protein 222 (Tmem222) (Mus musculus (Mouse)).